Consider the following 292-residue polypeptide: 1,4-dihydroxy-2-naphthoate octaprenyltransferase (292 aa).

Transmembrane regions (helical) follow at residues 35–55 (AAVW…VIGV), 101–121 (ALAG…VGAI), 137–157 (GYAG…AVLG), 166–186 (VDWV…SVLV), 220–240 (LLAV…WCVV), and 271–291 (TGLA…FGQL).

The protein belongs to the MenA family. Type 1 subfamily. Mg(2+) serves as cofactor.

The protein resides in the cell membrane. It catalyses the reaction an all-trans-polyprenyl diphosphate + 1,4-dihydroxy-2-naphthoate + H(+) = a 2-demethylmenaquinol + CO2 + diphosphate. It participates in quinol/quinone metabolism; menaquinone biosynthesis; menaquinol from 1,4-dihydroxy-2-naphthoate: step 1/2. With respect to regulation, activity is abolished by EDTA. Inhibited by Ro 48-8071, which is non-competitive with regard to DHNA and competitive with regard to the isoprenyldiphosphate substrate. Its function is as follows. Conversion of 1,4-dihydroxy-2-naphthoate (DHNA) to demethylmenaquinone (DMK). Can use a variety of allylic isoprenyl diphosphates as substrates but has a requirement for at least three isoprene units. The chain is 1,4-dihydroxy-2-naphthoate octaprenyltransferase from Mycobacterium tuberculosis (strain ATCC 25618 / H37Rv).